Here is a 761-residue protein sequence, read N- to C-terminus: RNA-binding protein mde7 (761 aa).

Composition is skewed to polar residues over residues P31 to L46, S58 to F83, and S99 to E110. Disordered stretches follow at residues P31 to E110 and H188 to N213. Basic and acidic residues predominate over residues H188–V197. A compositionally biased stretch (low complexity) spans S199 to A211. Residues I223–Q289 enclose the RRM 1 domain. The segment covering E442 to N466 has biased composition (polar residues). The interval E442–I468 is disordered. Positions N602–N679 constitute an RRM 2 domain.

This Schizosaccharomyces pombe (strain 972 / ATCC 24843) (Fission yeast) protein is RNA-binding protein mde7 (mde7).